The sequence spans 551 residues: Cleavage and polyadenylation specificity factor subunit 6 (551 aa).

Residues 1–213 (MADGVDHIDI…RGRFPGAVPG (213 aa)) are necessary for interaction with NXF1. Residues 81–161 (IALYIGNLTW…QNPVVTPCNK (81 aa)) enclose the RRM domain. A necessary for interaction with NUDT21/CPSF5 region spans residues 81–161 (IALYIGNLTW…QNPVVTPCNK (81 aa)). The segment at 81–161 (IALYIGNLTW…QNPVVTPCNK (81 aa)) is necessary for nuclear paraspeckles localization. Thr157 is modified (phosphothreonine). A compositionally biased stretch (polar residues) spans 169 to 180 (MQSRKTTQSGQM). Disordered stretches follow at residues 169–411 (MQSR…PLSE) and 477–551 (LHGI…YRHR). Residues 202–206 (RGRGR) carry the GAR motif. Residues 207 to 219 (FPGAVPGGDRFPG) are compositionally biased toward low complexity. Pro residues-rich tracts occupy residues 220 to 265 (PAGP…PLAG), 285 to 366 (GQPP…PPPT), and 377 to 388 (GPPPTDPYGRPP). The segment at 358 to 551 (NPAFFPPPTN…RDREREYRHR (194 aa)) is (Microbial infection) Binds to HIV-1 capsid protein p24 (CA). Residues 389–404 (PYDRGDYGPPGREMDT) are compositionally biased toward basic and acidic residues. A phosphothreonine mark is found at Thr404 and Thr407. The tract at residues 404-551 (TARTPLSEAE…RDREREYRHR (148 aa)) is sufficient for nuclear speckle localization. The interval 405–551 (ARTPLSEAEF…RDREREYRHR (147 aa)) is necessary for RNA-binding. The necessary for interaction with SRSF3, SRSF7 and TRA2B/SFRS10 stretch occupies residues 481–551 (ESKSYGSGSR…RDREREYRHR (71 aa)). Residues 489–503 (SRRERSRERDHSRSR) are compositionally biased toward basic and acidic residues. The arg/Ser-rich domain stretch occupies residues 490–551 (RRERSRERDH…RDREREYRHR (62 aa)). Phosphoserine is present on residues Ser494, Ser500, Ser511, Ser513, and Ser525. Residues 504–514 (EKSRRHKSRSR) are compositionally biased toward basic residues. The sufficient for nuclear targeting stretch occupies residues 510–551 (KSRSRDRHDDYYRERSRERERHRDRDRDRDRERDREREYRHR). Residues 515–551 (DRHDDYYRERSRERERHRDRDRDRDRERDREREYRHR) are compositionally biased toward basic and acidic residues.

The protein belongs to the RRM CPSF6/7 family. As to quaternary structure, component of the cleavage factor Im (CFIm) complex which is a heterotetramer composed of two subunits of NUDT21/CPSF5 and two subunits of CPSF6 or CPSF7 or a heterodimer of CPSF6 and CPSF7. The cleavage factor Im (CFIm) complex associates with the CPSF and CSTF complexes to promote the assembly of the core mRNA 3'-processing machinery. Associates with the exon junction complex (EJC). Associates with the 80S ribosome particle. Interacts (via the RRM domain) with NUDT21/CPSF5; this interaction is direct and enhances binding to RNA. Interacts (via Arg/Ser-rich domain) with FIP1L1 (preferentially via unphosphorylated form and Arg/Glu/Asp-rich domain); this interaction mediates, at least in part, the interaction between the CFIm and CPSF complexes and may be inhibited by CPSF6 hyper-phosphorylation. Interacts (via N-terminus) with NXF1; this interaction is direct. Interacts with SRSF3. Interacts with SRSF7. Interacts with SNRNP70. Interacts with TRA2B/SFRS10. Interacts with UPF1. Interacts with UPF3B. Interacts with VIRMA. Interacts (via Arg/Ser-rich domain) with TNPO3; promoting nuclear import of CPSF6 independently of its phosphorylation status. Interacts with YTHDC1. In terms of assembly, (Microbial infection) Interacts (via C-terminus) with HIV-1 capsid protein p24 (CA). In terms of processing, phosphorylated. Phosphorylated in the Arg/Ser-rich domain by SRPK1, in vitro. Post-translationally, symmetrically dimethylated on arginine residues in the GAR motif by PRMT5 in a WDR77- and CLNS1A-dependent manner. Asymmetrically dimethylated on arginine residues in the GAR motif by PRMT1.

The protein localises to the nucleus. The protein resides in the nucleoplasm. It localises to the nucleus speckle. Its subcellular location is the cytoplasm. Its function is as follows. Component of the cleavage factor Im (CFIm) complex that functions as an activator of the pre-mRNA 3'-end cleavage and polyadenylation processing required for the maturation of pre-mRNA into functional mRNAs. CFIm contributes to the recruitment of multiprotein complexes on specific sequences on the pre-mRNA 3'-end, so called cleavage and polyadenylation signals (pA signals). Most pre-mRNAs contain multiple pA signals, resulting in alternative cleavage and polyadenylation (APA) producing mRNAs with variable 3'-end formation. The CFIm complex acts as a key regulator of cleavage and polyadenylation site choice during APA through its binding to 5'-UGUA-3' elements localized in the 3'-untranslated region (UTR) for a huge number of pre-mRNAs. CPSF6 enhances NUDT21/CPSF5 binding to 5'-UGUA-3' elements localized upstream of pA signals and promotes RNA looping, and hence activates directly the mRNA 3'-processing machinery. Plays a role in mRNA export. (Microbial infection) Binds HIV-1 capsid-nucleocapsid (HIV-1 CA-NC) complexes and might thereby promote the integration of the virus in the nucleus of dividing cells (in vitro). In Homo sapiens (Human), this protein is Cleavage and polyadenylation specificity factor subunit 6.